Reading from the N-terminus, the 203-residue chain is Thymidylate kinase (203 aa).

Residue 14–21 coordinates ATP; sequence GGEGIGKS.

This sequence belongs to the thymidylate kinase family.

The catalysed reaction is dTMP + ATP = dTDP + ADP. Phosphorylation of dTMP to form dTDP in both de novo and salvage pathways of dTTP synthesis. The chain is Thymidylate kinase from Rickettsia conorii (strain ATCC VR-613 / Malish 7).